The following is a 356-amino-acid chain: Glutamine synthetase (356 aa).

In terms of domain architecture, GS beta-grasp spans 19 to 99 (VIAEYIWIGG…VICDTYTPAG (81 aa)). The GS catalytic domain occupies 106–356 (KRHGAAKIFS…IAETTLLWKP (251 aa)).

This sequence belongs to the glutamine synthetase family. As to quaternary structure, homooctamer. In terms of tissue distribution, found at highest levels in root nodules.

It is found in the cytoplasm. The catalysed reaction is L-glutamate + NH4(+) + ATP = L-glutamine + ADP + phosphate + H(+). This chain is Glutamine synthetase (GLN1), found in Alnus glutinosa (European alder).